The sequence spans 275 residues: 4-diphosphocytidyl-2-C-methyl-D-erythritol kinase (275 aa).

Residue Lys-14 is part of the active site. 98-108 (PMGAGLGGGSS) contributes to the ATP binding site. Asp-140 is an active-site residue.

It belongs to the GHMP kinase family. IspE subfamily.

The catalysed reaction is 4-CDP-2-C-methyl-D-erythritol + ATP = 4-CDP-2-C-methyl-D-erythritol 2-phosphate + ADP + H(+). Its pathway is isoprenoid biosynthesis; isopentenyl diphosphate biosynthesis via DXP pathway; isopentenyl diphosphate from 1-deoxy-D-xylulose 5-phosphate: step 3/6. In terms of biological role, catalyzes the phosphorylation of the position 2 hydroxy group of 4-diphosphocytidyl-2C-methyl-D-erythritol. This chain is 4-diphosphocytidyl-2-C-methyl-D-erythritol kinase, found in Francisella tularensis subsp. holarctica (strain FTNF002-00 / FTA).